The sequence spans 187 residues: Threonylcarbamoyl-AMP synthase (187 aa).

Positions 4–187 (NHTDDPFLLD…GHSGQTIRDN (184 aa)) constitute a YrdC-like domain. Positions 168 to 187 (GSRSPSKIRHGHSGQTIRDN) are disordered.

Belongs to the SUA5 family. TsaC subfamily.

The protein resides in the cytoplasm. The catalysed reaction is L-threonine + hydrogencarbonate + ATP = L-threonylcarbamoyladenylate + diphosphate + H2O. In terms of biological role, required for the formation of a threonylcarbamoyl group on adenosine at position 37 (t(6)A37) in tRNAs that read codons beginning with adenine. Catalyzes the conversion of L-threonine, HCO(3)(-)/CO(2) and ATP to give threonylcarbamoyl-AMP (TC-AMP) as the acyladenylate intermediate, with the release of diphosphate. The sequence is that of Threonylcarbamoyl-AMP synthase from Pseudoalteromonas atlantica (strain T6c / ATCC BAA-1087).